The sequence spans 434 residues: Enolase (434 aa).

Glutamine 163 contacts (2R)-2-phosphoglycerate. Residue glutamate 205 is the Proton donor of the active site. Mg(2+) is bound by residues aspartate 242, glutamate 291, and aspartate 318. Lysine 343, arginine 372, serine 373, and lysine 394 together coordinate (2R)-2-phosphoglycerate. The active-site Proton acceptor is the lysine 343.

This sequence belongs to the enolase family. Requires Mg(2+) as cofactor.

It localises to the cytoplasm. Its subcellular location is the secreted. The protein localises to the cell surface. It catalyses the reaction (2R)-2-phosphoglycerate = phosphoenolpyruvate + H2O. It participates in carbohydrate degradation; glycolysis; pyruvate from D-glyceraldehyde 3-phosphate: step 4/5. Its function is as follows. Catalyzes the reversible conversion of 2-phosphoglycerate (2-PG) into phosphoenolpyruvate (PEP). It is essential for the degradation of carbohydrates via glycolysis. This Streptococcus sanguinis (strain SK36) protein is Enolase.